Consider the following 51-residue polypeptide: Sperm protamine P1 (51 aa).

2 disulfides stabilise this stretch: C7–C15 and C38–C48.

This sequence belongs to the protamine P1 family. As to quaternary structure, cross-linked by interchain disulfide bonds around the DNA-helix. Phosphorylated by SRPK1. In terms of tissue distribution, testis.

Its subcellular location is the nucleus. It localises to the chromosome. Protamines substitute for histones in the chromatin of sperm during the haploid phase of spermatogenesis. They compact sperm DNA into a highly condensed, stable and inactive complex. The polypeptide is Sperm protamine P1 (Prm1) (Rattus norvegicus (Rat)).